The chain runs to 432 residues: Amino-acid acetyltransferase (432 aa).

The N-acetyltransferase domain maps to 286 to 432 (EVVREATIED…RNSKIFEKPL (147 aa)).

It belongs to the acetyltransferase family. ArgA subfamily.

It localises to the cytoplasm. The catalysed reaction is L-glutamate + acetyl-CoA = N-acetyl-L-glutamate + CoA + H(+). It participates in amino-acid biosynthesis; L-arginine biosynthesis; N(2)-acetyl-L-ornithine from L-glutamate: step 1/4. This chain is Amino-acid acetyltransferase (argA), found in Pseudomonas putida (strain ATCC 47054 / DSM 6125 / CFBP 8728 / NCIMB 11950 / KT2440).